Here is a 271-residue protein sequence, read N- to C-terminus: Pyrroline-5-carboxylate reductase (271 aa).

The protein belongs to the pyrroline-5-carboxylate reductase family.

The protein localises to the cytoplasm. The catalysed reaction is L-proline + NADP(+) = (S)-1-pyrroline-5-carboxylate + NADPH + 2 H(+). It catalyses the reaction L-proline + NAD(+) = (S)-1-pyrroline-5-carboxylate + NADH + 2 H(+). The protein operates within amino-acid biosynthesis; L-proline biosynthesis; L-proline from L-glutamate 5-semialdehyde: step 1/1. Its function is as follows. Catalyzes the reduction of 1-pyrroline-5-carboxylate (PCA) to L-proline. This chain is Pyrroline-5-carboxylate reductase, found in Staphylococcus haemolyticus (strain JCSC1435).